A 218-amino-acid chain; its full sequence is Protein N-lysine methyltransferase METTL21A (218 aa).

S-adenosyl-L-methionine-binding positions include Trp47, 73 to 75, Asp94, Trp125, and Ala143; that span reads GAG.

This sequence belongs to the methyltransferase superfamily. METTL21 family. Interacts with heat shock 70 family members; at least some of these proteins are methylation substrates.

It localises to the cytoplasm. The enzyme catalyses L-lysyl-[protein] + 3 S-adenosyl-L-methionine = N(6),N(6),N(6)-trimethyl-L-lysyl-[protein] + 3 S-adenosyl-L-homocysteine + 3 H(+). Its function is as follows. Protein-lysine methyltransferase that selectively trimethylates residues in heat shock protein 70 (HSP70) family members. Contributes to the in vivo trimethylation of Lys residues in HSPA1 and HSPA8. In vitro methylates 'Lys-561' in HSPA1, 'Lys-564' in HSPA2, 'Lys-585' in HSPA5, 'Lys-563' in HSPA6 and 'Lys-561' in HSPA8. This Mus musculus (Mouse) protein is Protein N-lysine methyltransferase METTL21A (Mettl21A).